We begin with the raw amino-acid sequence, 813 residues long: Palmitoyltransferase AKR1 (813 aa).

Residues 1-83 form a disordered region; that stretch reads MAKKKSKSKS…PVTTSNETDP (83 aa). The Cytoplasmic segment spans residues 1 to 387; that stretch reads MAKKKSKSKS…KPWVSAKLGK (387 aa). Over residues 9-24 the composition is skewed to low complexity; that stretch reads KSSSPKPKVSSTAAKP. Residues 28–46 show a composition bias toward polar residues; that stretch reads DNQQNIENVQDSPSALQQQ. A compositionally biased stretch (low complexity) spans 47-78; sequence SATAEESENTATTATPSEGTTATTESSPVTTS. ANK repeat units lie at residues 133–162, 167–196, 201–231, 235–264, 276–305, and 309–338; these read PTLA…VLVN, DEIT…NPNQ, LKAS…DPNL, QTYN…STDS, SNRT…DVSK, and SLFI…DIYF. Residues 388 to 408 traverse the membrane as a helical segment; it reads IITFLTPYFLLPLSFNVLSMG. Topologically, residues 409 to 412 are lumenal; sequence GDQG. Residues 413–433 form a helical membrane-spanning segment; it reads GFIIPKLILAIGILGGGIYLL. Over 434–452 the chain is Cytoplasmic; the sequence is NKLIISQYIFDDKKLAKSP. Residues 453-473 form a helical membrane-spanning segment; that stretch reads ILAGVFSATAFWSVLVWLYNI. The Lumenal portion of the chain corresponds to 474–485; it reads LPTTFIHNFFAN. Residues 486 to 506 traverse the membrane as a helical segment; that stretch reads VIMAILIAIFTWSFFKAMFIN. The Cytoplasmic portion of the chain corresponds to 507-579; it reads PGFVPTPADN…YNDIGVRNHK (73 aa). Positions 536–586 constitute a DHHC domain; it reads HFCVNSFVRKPLRSRYSKHNKRLIARFDHSCPWVYNDIGVRNHKIFITFVY. The active-site S-palmitoyl cysteine intermediate is the Cys566. Residues 580–600 form a helical membrane-spanning segment; sequence IFITFVYSLNMAIFVFLYLSL. Topologically, residues 601–642 are lumenal; it reads QYFDKVKDQYDSDDEGEGEGFVCSILGDDMCYGYKNHHFHFN. A helical membrane pass occupies residues 643–663; sequence VFMWDLFQCVWVSFLCIVQTF. The Cytoplasmic portion of the chain corresponds to 664 to 813; it reads QILKGLTTWE…VDYYTLYSYH (150 aa).

Belongs to the DHHC palmitoyltransferase family. AKR/ZDHHC17 subfamily.

The protein localises to the early endosome membrane. Its subcellular location is the golgi apparatus membrane. It catalyses the reaction L-cysteinyl-[protein] + hexadecanoyl-CoA = S-hexadecanoyl-L-cysteinyl-[protein] + CoA. Palmitoyltransferase specific for casein kinase 1. This is Palmitoyltransferase AKR1 (AKR1) from Candida albicans (strain SC5314 / ATCC MYA-2876) (Yeast).